Reading from the N-terminus, the 65-residue chain is Large ribosomal subunit protein bL35 (65 aa).

This sequence belongs to the bacterial ribosomal protein bL35 family.

This Phytoplasma australiense protein is Large ribosomal subunit protein bL35.